The sequence spans 465 residues: NADH-quinone oxidoreductase subunit N (465 aa).

The next 13 helical transmembrane spans lie at 6–26 (ILPE…GIVF), 30–50 (TINL…ILSA), 66–86 (LYIR…LLLL), 98–118 (SILI…NNLI), 156–176 (ALSS…TGLV), 194–214 (IVFG…IAPF), 226–246 (PTIV…TFLI), 261–281 (FQPV…FGAL), 289–309 (LLAY…SIFT), 317–337 (LIYL…FIQI), 363–383 (ILLF…KLFI), 391–411 (GFIG…YYYL), and 432–452 (SLFI…MCVE).

Belongs to the complex I subunit 2 family. As to quaternary structure, NDH-1 is composed of 14 different subunits. Subunits NuoA, H, J, K, L, M, N constitute the membrane sector of the complex.

It is found in the cell membrane. It carries out the reaction a quinone + NADH + 5 H(+)(in) = a quinol + NAD(+) + 4 H(+)(out). In terms of biological role, NDH-1 shuttles electrons from NADH, via FMN and iron-sulfur (Fe-S) centers, to quinones in the respiratory chain. The immediate electron acceptor for the enzyme in this species is believed to be ubiquinone. Couples the redox reaction to proton translocation (for every two electrons transferred, four hydrogen ions are translocated across the cytoplasmic membrane), and thus conserves the redox energy in a proton gradient. This is NADH-quinone oxidoreductase subunit N from Wolbachia sp. subsp. Brugia malayi (strain TRS).